Consider the following 397-residue polypeptide: CCA-adding enzyme (397 aa).

2 residues coordinate ATP: glycine 26 and arginine 29. Glycine 26 and arginine 29 together coordinate CTP. 2 residues coordinate Mg(2+): aspartate 39 and aspartate 41. ATP contacts are provided by arginine 110, aspartate 153, arginine 156, arginine 159, and arginine 162. CTP-binding residues include arginine 110, aspartate 153, arginine 156, arginine 159, and arginine 162.

It belongs to the tRNA nucleotidyltransferase/poly(A) polymerase family. Bacterial CCA-adding enzyme type 3 subfamily. Homodimer. Mg(2+) is required as a cofactor.

The catalysed reaction is a tRNA precursor + 2 CTP + ATP = a tRNA with a 3' CCA end + 3 diphosphate. The enzyme catalyses a tRNA with a 3' CCA end + 2 CTP + ATP = a tRNA with a 3' CCACCA end + 3 diphosphate. In terms of biological role, catalyzes the addition and repair of the essential 3'-terminal CCA sequence in tRNAs without using a nucleic acid template. Adds these three nucleotides in the order of C, C, and A to the tRNA nucleotide-73, using CTP and ATP as substrates and producing inorganic pyrophosphate. tRNA 3'-terminal CCA addition is required both for tRNA processing and repair. Also involved in tRNA surveillance by mediating tandem CCA addition to generate a CCACCA at the 3' terminus of unstable tRNAs. While stable tRNAs receive only 3'-terminal CCA, unstable tRNAs are marked with CCACCA and rapidly degraded. This chain is CCA-adding enzyme, found in Bacillus cereus (strain ZK / E33L).